Here is a 149-residue protein sequence, read N- to C-terminus: SKP1-like protein 14 (149 aa).

Residues 91-149 (LLAANYLNIKGLLDLSAQTVADRIKDKTPEEIREIFNIENDFTPEEEAAVRKENAWAFE) are interaction with the F-box domain of F-box proteins.

This sequence belongs to the SKP1 family. As to quaternary structure, part of a SCF (SKP1-cullin-F-box) protein ligase complex. Interacts with CPR1/CPR30, At3g61590, At4g39550 and At5g49610. Restricted to inflorescences, pollen and leaves.

Its subcellular location is the nucleus. Its pathway is protein modification; protein ubiquitination. Its function is as follows. Involved in ubiquitination and subsequent proteasomal degradation of target proteins. Together with CUL1, RBX1 and a F-box protein, it forms a SCF E3 ubiquitin ligase complex. The functional specificity of this complex depends on the type of F-box protein. In the SCF complex, it serves as an adapter that links the F-box protein to CUL1. The sequence is that of SKP1-like protein 14 (ASK14) from Arabidopsis thaliana (Mouse-ear cress).